The following is a 451-amino-acid chain: Mannan endo-1,6-alpha-mannosidase DFG5 (451 aa).

The signal sequence occupies residues 1–21; that stretch reads MVSLQQLTISILLLFTASVQS. Residues N86, N111, N135, N203, N243, N268, and N402 are each glycosylated (N-linked (GlcNAc...) asparagine). A429 carries GPI-anchor amidated alanine lipidation. A propeptide spans 430–451 (removed in mature form); the sequence is GAGVLTAIVLAVILGGAIWMIF.

The protein belongs to the glycosyl hydrolase 76 family. The GPI-anchor is attached to the protein in the endoplasmic reticulum and serves to target the protein to the cell surface. There, the glucosamine-inositol phospholipid moiety is cleaved off and the GPI-modified mannoprotein is covalently attached via its lipidless GPI glycan remnant to the 1,6-beta-glucan of the outer cell wall layer. In terms of processing, N-mannosylated.

Its subcellular location is the secreted. The protein localises to the cell wall. It localises to the cell membrane. It catalyses the reaction Random hydrolysis of (1-&gt;6)-alpha-D-mannosidic linkages in unbranched (1-&gt;6)-mannans.. Required for normal synthesis of the cell wall and alkaline pH-induced hypha formation. The polypeptide is Mannan endo-1,6-alpha-mannosidase DFG5 (DFG5) (Candida albicans (strain SC5314 / ATCC MYA-2876) (Yeast)).